The sequence spans 387 residues: 4-hydroxy-3-methylbut-2-en-1-yl diphosphate synthase (flavodoxin) (387 aa).

Residues cysteine 280, cysteine 283, cysteine 315, and glutamate 322 each contribute to the [4Fe-4S] cluster site.

Belongs to the IspG family. [4Fe-4S] cluster is required as a cofactor.

It catalyses the reaction (2E)-4-hydroxy-3-methylbut-2-enyl diphosphate + oxidized [flavodoxin] + H2O + 2 H(+) = 2-C-methyl-D-erythritol 2,4-cyclic diphosphate + reduced [flavodoxin]. Its pathway is isoprenoid biosynthesis; isopentenyl diphosphate biosynthesis via DXP pathway; isopentenyl diphosphate from 1-deoxy-D-xylulose 5-phosphate: step 5/6. In terms of biological role, converts 2C-methyl-D-erythritol 2,4-cyclodiphosphate (ME-2,4cPP) into 1-hydroxy-2-methyl-2-(E)-butenyl 4-diphosphate. This is 4-hydroxy-3-methylbut-2-en-1-yl diphosphate synthase (flavodoxin) from Mycobacterium bovis (strain BCG / Pasteur 1173P2).